The primary structure comprises 1027 residues: Transient-receptor-potential-like protein (1027 aa).

The interval 1 to 22 (MTKEGMLSAAGRRFSRCAPSPR) is disordered. ANK repeat units follow at residues 85–115 (MGRT…RIGN), 117–141 (LLCA…ITRE), and 163–192 (SDIS…SIEK). A run of 6 helical transmembrane segments spans residues 355-375 (FFLY…YILM), 391-411 (FFYY…ATFE), 473-493 (FLMI…YYIF), 516-536 (VAEA…IYLF), 559-579 (FCFI…QLYW), and 640-660 (MFIM…IAMM). 2 disordered regions span residues 825 to 929 (KRDI…TYTS) and 1008 to 1027 (ENVK…NVEK). Positions 855 to 874 (EESEEDDKSDETSSTDEEAD) are enriched in acidic residues. Residues 910-923 (RASEADSKLPDRPL) show a composition bias toward basic and acidic residues. The span at 1008–1017 (ENVKSPSPAS) shows a compositional bias: polar residues.

This sequence belongs to the transient receptor (TC 1.A.4) family. STrpC subfamily.

It localises to the membrane. Functionally, could mediate calcium entry and form a calcium permeant channel. This chain is Transient-receptor-potential-like protein (trp-1), found in Caenorhabditis elegans.